The sequence spans 381 residues: tRNA-specific 2-thiouridylase MnmA (381 aa).

Residues 26 to 33 and L52 contribute to the ATP site; that span reads AMSGGVDS. C120 (nucleophile) is an active-site residue. A disulfide bridge connects residues C120 and C217. Residue G144 coordinates ATP. The tract at residues 166–168 is interaction with tRNA; the sequence is RDQ. Catalysis depends on C217, which acts as the Cysteine persulfide intermediate.

The protein belongs to the MnmA/TRMU family.

It is found in the cytoplasm. It catalyses the reaction S-sulfanyl-L-cysteinyl-[protein] + uridine(34) in tRNA + AH2 + ATP = 2-thiouridine(34) in tRNA + L-cysteinyl-[protein] + A + AMP + diphosphate + H(+). In terms of biological role, catalyzes the 2-thiolation of uridine at the wobble position (U34) of tRNA, leading to the formation of s(2)U34. In Ruegeria sp. (strain TM1040) (Silicibacter sp.), this protein is tRNA-specific 2-thiouridylase MnmA.